Reading from the N-terminus, the 219-residue chain is Glycerol-3-phosphate acyltransferase 2 (219 aa).

The next 5 membrane-spanning stretches (helical) occupy residues 1–21 (MVFW…GSTP), 55–75 (WPAL…VVFA), 93–113 (ALDL…AVLL), 135–155 (VLLA…GVAL), and 160–180 (IVSL…CGLE).

The protein belongs to the PlsY family. As to quaternary structure, probably interacts with PlsX.

It localises to the cell inner membrane. The enzyme catalyses an acyl phosphate + sn-glycerol 3-phosphate = a 1-acyl-sn-glycero-3-phosphate + phosphate. Its pathway is lipid metabolism; phospholipid metabolism. Its function is as follows. Catalyzes the transfer of an acyl group from acyl-phosphate (acyl-PO(4)) to glycerol-3-phosphate (G3P) to form lysophosphatidic acid (LPA). This enzyme utilizes acyl-phosphate as fatty acyl donor, but not acyl-CoA or acyl-ACP. In Rhizobium johnstonii (strain DSM 114642 / LMG 32736 / 3841) (Rhizobium leguminosarum bv. viciae), this protein is Glycerol-3-phosphate acyltransferase 2.